The following is a 91-amino-acid chain: Small ribosomal subunit protein uS19 (91 aa).

Belongs to the universal ribosomal protein uS19 family.

Protein S19 forms a complex with S13 that binds strongly to the 16S ribosomal RNA. The polypeptide is Small ribosomal subunit protein uS19 (Pseudomonas syringae pv. syringae (strain B728a)).